The following is a 296-amino-acid chain: Chelated iron transport system membrane protein YfeB (296 aa).

One can recognise an ABC transporter domain in the interval 11–246; the sequence is LVVDNVTVTY…NLEMTFGGVL (236 aa). An ATP-binding site is contributed by 44–51; the sequence is GVNGSGKS. A disordered region spans residues 276 to 296; sequence VFYGHTKNDPPAQSQSKEQNS. Residues 286 to 296 show a composition bias toward polar residues; that stretch reads PAQSQSKEQNS.

This sequence belongs to the ABC transporter superfamily.

It localises to the cell inner membrane. Part of an ATP-driven transport system YfeABCD for chelated iron. The chain is Chelated iron transport system membrane protein YfeB (yfeB) from Yersinia pestis.